The primary structure comprises 348 residues: Protein RecA (348 aa).

66–73 (GPESSGKT) serves as a coordination point for ATP.

The protein belongs to the RecA family.

It is found in the cytoplasm. Functionally, can catalyze the hydrolysis of ATP in the presence of single-stranded DNA, the ATP-dependent uptake of single-stranded DNA by duplex DNA, and the ATP-dependent hybridization of homologous single-stranded DNAs. It interacts with LexA causing its activation and leading to its autocatalytic cleavage. The sequence is that of Protein RecA from Neisseria gonorrhoeae (strain NCCP11945).